The sequence spans 224 residues: Peroxiredoxin-6 (224 aa).

Residues 5–169 (LLLGDVAPNF…ILRVVISLQL (165 aa)) form the Thioredoxin domain. The tract at residues 31-40 (DSWGILFSHP) is required and sufficient for targeting to lysosomes and lamellar bodies. Thr-44 carries the post-translational modification Phosphothreonine. The active-site Cysteine sulfenic acid (-SOH) intermediate; for peroxidase activity is Cys-47. The residue at position 63 (Lys-63) is an N6-acetyllysine. Tyr-89 bears the Phosphotyrosine mark. The For phospholipase activity role is filled by Asp-140. Position 177 is a phosphothreonine; by MAPK (Thr-177). Lys-209 carries the post-translational modification N6-acetyllysine; alternate. At Lys-209 the chain carries N6-succinyllysine; alternate.

The protein belongs to the peroxiredoxin family. Prx6 subfamily. Homodimer. Interacts with GSTP1; mediates PRDX6 glutathionylation and regeneration. Interacts with APEX1. Interacts with STH. May interact with FAM168B. May interact with HTR2A. In terms of processing, irreversibly inactivated by overoxidation of Cys-47 to sulfinic acid (Cys-SO(2)H) and sulfonic acid (Cys-SO(3)H) forms upon oxidative stress. Phosphorylation at Thr-177 by MAP kinases increases the phospholipase activity of the enzyme. The phosphorylated form exhibits a greater lysophosphatidylcholine acyltransferase activity compared to the non-phosphorylated form.

It localises to the cytoplasm. The protein resides in the lysosome. The catalysed reaction is a hydroperoxide + 2 glutathione = an alcohol + glutathione disulfide + H2O. It carries out the reaction a 1,2-diacyl-sn-glycero-3-phosphocholine + H2O = a 1-acyl-sn-glycero-3-phosphocholine + a fatty acid + H(+). It catalyses the reaction a 1-acyl-sn-glycero-3-phosphocholine + an acyl-CoA = a 1,2-diacyl-sn-glycero-3-phosphocholine + CoA. The enzyme catalyses 1-hexadecanoyl-sn-glycero-3-phosphocholine + hexadecanoyl-CoA = 1,2-dihexadecanoyl-sn-glycero-3-phosphocholine + CoA. The catalysed reaction is 1,2-dihexadecanoyl-sn-glycero-3-phosphocholine + H2O = 1-hexadecanoyl-sn-glycero-3-phosphocholine + hexadecanoate + H(+). Thiol-specific peroxidase that catalyzes the reduction of hydrogen peroxide and organic hydroperoxides to water and alcohols, respectively. Can reduce H(2)O(2) and short chain organic, fatty acid, and phospholipid hydroperoxides. Also has phospholipase activity, and can therefore either reduce the oxidized sn-2 fatty acyl group of phospholipids (peroxidase activity) or hydrolyze the sn-2 ester bond of phospholipids (phospholipase activity). These activities are dependent on binding to phospholipids at acidic pH and to oxidized phospholipds at cytosolic pH. Plays a role in cell protection against oxidative stress by detoxifying peroxides and in phospholipid homeostasis. Exhibits acyl-CoA-dependent lysophospholipid acyltransferase which mediates the conversion of lysophosphatidylcholine (1-acyl-sn-glycero-3-phosphocholine or LPC) into phosphatidylcholine (1,2-diacyl-sn-glycero-3-phosphocholine or PC). Shows a clear preference for LPC as the lysophospholipid and for palmitoyl CoA as the fatty acyl substrate. The chain is Peroxiredoxin-6 (PRDX6) from Pongo abelii (Sumatran orangutan).